Consider the following 667-residue polypeptide: Fermitin family homolog 3 (667 aa).

Residue Ser8 is modified to Phosphoserine. Tyr11 is modified (phosphotyrosine). Residues 229-558 (WLDSSRCLMQ…SLPDFGISYV (330 aa)) form the FERM domain. Residues 354-457 (DHLRIFRIPR…WMAGCRLASK (104 aa)) form the PH domain. Phosphotyrosine is present on Tyr504. A Phosphothreonine modification is found at Thr591.

It belongs to the kindlin family. As to quaternary structure, interacts with ITGB1, ITGB2 and ITGB3 (via cytoplasmic tails). In terms of tissue distribution, highly expressed in lymph node. Expressed in thymus, spleen and leukocytes. Weakly expressed in placenta, small intestine, stomach, testis and lung. Overexpressed in B-cell malignancies.

The protein localises to the cell projection. It localises to the podosome. Plays a central role in cell adhesion in hematopoietic cells. Acts by activating the integrin beta-1-3 (ITGB1, ITGB2 and ITGB3). Required for integrin-mediated platelet adhesion and leukocyte adhesion to endothelial cells. Required for activation of integrin beta-2 (ITGB2) in polymorphonuclear granulocytes (PMNs). Its function is as follows. Isoform 2 may act as a repressor of NF-kappa-B and apoptosis. In Homo sapiens (Human), this protein is Fermitin family homolog 3 (FERMT3).